The chain runs to 600 residues: UvrABC system protein C (600 aa).

A GIY-YIG domain is found at 15-100; it reads NSAGVYQYFN…IKQLHPKYNI (86 aa). Residues 203–238 enclose the UVR domain; it reads SILIKNLEKQMLVLAQNENYEEAAKVRDQIVTIKDL.

The protein belongs to the UvrC family. In terms of assembly, interacts with UvrB in an incision complex.

It is found in the cytoplasm. Functionally, the UvrABC repair system catalyzes the recognition and processing of DNA lesions. UvrC both incises the 5' and 3' sides of the lesion. The N-terminal half is responsible for the 3' incision and the C-terminal half is responsible for the 5' incision. This Campylobacter jejuni subsp. jejuni serotype O:6 (strain 81116 / NCTC 11828) protein is UvrABC system protein C.